Consider the following 579-residue polypeptide: MFS-type transporter olcL (579 aa).

Positions 1–24 (MANIGGSNAVSSAQGSQISDSPTT) are enriched in polar residues. The segment at 1-75 (MANIGGSNAV…GFGEDGCQSD (75 aa)) is disordered. A compositionally biased stretch (basic and acidic residues) spans 25–35 (VDDRLDEHKET). The segment covering 36–54 (STQSIDHSENITQSPTSLQ) has biased composition (polar residues). Asparagine 45 is a glycosylation site (N-linked (GlcNAc...) asparagine). The next 9 membrane-spanning stretches (helical) occupy residues 85-105 (LAAI…DNTI), 121-141 (GDVG…TLVF), 159-179 (AVFE…GLII), 183-203 (IAGL…SQSV), 214-234 (LVGG…GAFT), 241-261 (WCFY…LLFF), 282-302 (LIGL…LQWG), 310-330 (SGRI…FIMV), and 355-375 (LFNF…PVWF). N-linked (GlcNAc...) asparagine glycosylation is present at asparagine 380. 5 helical membrane passes run 388 to 408 (LMNL…GYGV), 411 to 431 (IGYY…GAGL), 439 to 459 (FGPS…GLGL), 479 to 501 (IAIV…QNVF), and 553 to 573 (FYVG…IQWI).

It belongs to the major facilitator superfamily. TCR/Tet family.

Its subcellular location is the peroxisome membrane. MFS-type transporter; part of the gene cluster that mediates the biosynthesis of 15-deoxyoxalicine B. The first step of the pathway is the synthesis of nicotinyl-CoA from nicotinic acid by the nicotinic acid-CoA ligase olcI. Nicotinyl-CoA is then a substrate of polyketide synthase olcA to produce 4-hydroxy-6-(3-pyridinyl)-2H-pyran-2-one (HPPO) which is further prenylated by the polyprenyl transferase olcH to yield geranylgeranyl-HPPO. Geranylgeranyl pyrophosphate is provided by the cluster-specific geranylgeranyl pyrophosphate synthase olcC. The FAD-dependent monooxygenase olcE catalyzes the epoxidation of geranylgeranyl-HPPO and the terpene cyclase olcD catalyzes the cyclization of the terpenoid component, resulting in the formation of the tricyclic terpene moiety seen in predecaturin E. The cytochrome P450 monooxygenase then catalyzes the allylic oxidation of predecaturin E, which is followed by spirocylization with concomitant loss of one molecule of water to form decaturin E. Decaturin E is the substrate of the cytochrome P450 monooxygenase olcJ which hydroxylates it at the C-29 position to form decaturin F. The short-chain dehydrogenase/reductase olcF may catalyze the oxidation of decaturin F to generate the 29-hydroxyl-27-one intermediate, and subsequent hemiacetal formation probably leads to the formation of decaturin C. The dioxygenase olcK may be a peroxisomal enzyme that catalyzes the hydroxylation of decaturin C into decaturin A once decaturin C is shuttled into the peroxisome by the MFS transporter olcL. Finally the cytochrome P450 monooxygenase olcB catalyzes the oxidative rearrangement to yield 15-deoxyoxalicine B. In the absence of olcJ, decaturin E may be shunted to a pathway in which it is oxidized to a ketone, possibly by olcF, to form decaturin D, which undergoes further allylic oxidation to yield decaturin G. Moreover, in the absence of oclK or oclL, oclB can convert decaturin C into 15-deoxyoxalicine A. This chain is MFS-type transporter olcL, found in Penicillium canescens.